The chain runs to 227 residues: MSLETSSPYAFYAFYQLYSQFYRVPKITLETVNDFLYQGKGLKPEFARSPLFVTWKKLKKGEYQLRGCIGTFSEGKIEEGLKRYALISALQDSRFTPIEREELSQLRCGCNLLSQFKTIYSSEGTGNSGDIWNWEIGKHGIEIKFRHPKTNSRMSATFLPEVIPEQGWDQRETFENLIEKAGCWNYLEEVMKHWEKYFDEVIRYEGTKSEIAWDEFETGLSTVAEAE.

Positions 5-220 (TSSPYAFYAF…IAWDEFETGL (216 aa)) constitute an AMMECR1 domain.

This is an uncharacterized protein from Kluyveromyces lactis (strain ATCC 8585 / CBS 2359 / DSM 70799 / NBRC 1267 / NRRL Y-1140 / WM37) (Yeast).